A 187-amino-acid chain; its full sequence is UPF0398 protein SAB1311c (187 aa).

It belongs to the UPF0398 family.

The sequence is that of UPF0398 protein SAB1311c from Staphylococcus aureus (strain bovine RF122 / ET3-1).